We begin with the raw amino-acid sequence, 170 residues long: Adenine phosphoribosyltransferase (170 aa).

The protein belongs to the purine/pyrimidine phosphoribosyltransferase family. In terms of assembly, homodimer.

Its subcellular location is the cytoplasm. The enzyme catalyses AMP + diphosphate = 5-phospho-alpha-D-ribose 1-diphosphate + adenine. Its pathway is purine metabolism; AMP biosynthesis via salvage pathway; AMP from adenine: step 1/1. Its function is as follows. Catalyzes a salvage reaction resulting in the formation of AMP, that is energically less costly than de novo synthesis. This Symbiobacterium thermophilum (strain DSM 24528 / JCM 14929 / IAM 14863 / T) protein is Adenine phosphoribosyltransferase.